The sequence spans 190 residues: Adenylate kinase (190 aa).

11–16 (GSGKGT) provides a ligand contact to ATP. The tract at residues 31-60 (STGDVLRGEMKAETELGKIAKDYIEKGQLV) is NMP. AMP-binding positions include T32, R37, 58-60 (QLV), 86-89 (GFPR), and Q93. An LID region spans residues 127-137 (ERGKVSGRSDD). An ATP-binding site is contributed by R128. 2 residues coordinate AMP: R134 and R145. G173 contacts ATP.

This sequence belongs to the adenylate kinase family. In terms of assembly, monomer.

It is found in the cytoplasm. It carries out the reaction AMP + ATP = 2 ADP. It functions in the pathway purine metabolism; AMP biosynthesis via salvage pathway; AMP from ADP: step 1/1. Its function is as follows. Catalyzes the reversible transfer of the terminal phosphate group between ATP and AMP. Plays an important role in cellular energy homeostasis and in adenine nucleotide metabolism. The sequence is that of Adenylate kinase from Parabacteroides distasonis (strain ATCC 8503 / DSM 20701 / CIP 104284 / JCM 5825 / NCTC 11152).